We begin with the raw amino-acid sequence, 608 residues long: Isoprene synthase, chloroplastic (608 aa).

The transit peptide at 1–45 (MATNLLCLSNKLSSPTPTPSTRFPQSKNFITQKTSLANPKPWRVI) directs the protein to the chloroplast. Residue aspartate 350 participates in dimethylallyl diphosphate binding. Mg(2+) contacts are provided by aspartate 350 and aspartate 354. Positions 350 to 354 (DDVYD) match the DDXXD motif motif. Dimethylallyl diphosphate-binding residues include glutamate 428, arginine 494, and asparagine 497. Residues asparagine 497, threonine 501, and glutamate 505 each contribute to the Mg(2+) site.

Belongs to the terpene synthase family. Tpsb subfamily. The cofactor is Mg(2+). It depends on Mn(2+) as a cofactor.

It localises to the plastid. The protein resides in the chloroplast. It carries out the reaction dimethylallyl diphosphate = isoprene + diphosphate. Functionally, lyase that catalyzes the formation of isoprene from dimethylallyl diphosphate. This is Isoprene synthase, chloroplastic (ISPS) from Pueraria montana var. lobata (Kudzu vine).